The sequence spans 449 residues: Glutamyl-tRNA reductase (449 aa).

Residues 49–52, S107, 112–114, and Q118 each bind substrate; these read TCNR and EPQ. The active-site Nucleophile is the C50. 187 to 192 lines the NADP(+) pocket; that stretch reads GAGETI. The tract at residues 418 to 449 is disordered; sequence QLVERSSEGDDSQQAGADGGAARGDRRAAGGS. A compositionally biased stretch (basic and acidic residues) spans 440 to 449; the sequence is RGDRRAAGGS.

Belongs to the glutamyl-tRNA reductase family. In terms of assembly, homodimer.

The enzyme catalyses (S)-4-amino-5-oxopentanoate + tRNA(Glu) + NADP(+) = L-glutamyl-tRNA(Glu) + NADPH + H(+). It functions in the pathway porphyrin-containing compound metabolism; protoporphyrin-IX biosynthesis; 5-aminolevulinate from L-glutamyl-tRNA(Glu): step 1/2. Its function is as follows. Catalyzes the NADPH-dependent reduction of glutamyl-tRNA(Glu) to glutamate 1-semialdehyde (GSA). This Halorhodospira halophila (strain DSM 244 / SL1) (Ectothiorhodospira halophila (strain DSM 244 / SL1)) protein is Glutamyl-tRNA reductase.